A 75-amino-acid polypeptide reads, in one-letter code: Small ribosomal subunit protein bS16 (75 aa).

The protein belongs to the bacterial ribosomal protein bS16 family.

In Campylobacter hominis (strain ATCC BAA-381 / DSM 21671 / CCUG 45161 / LMG 19568 / NCTC 13146 / CH001A), this protein is Small ribosomal subunit protein bS16.